The primary structure comprises 293 residues: GTPase Era (293 aa).

The Era-type G domain maps to 5–174 (RTISVCIIGR…ITGKAQIAPW (170 aa)). Positions 13 to 20 (GRPNSGKS) are G1. 13–20 (GRPNSGKS) contacts GTP. The G2 stretch occupies residues 39-43 (QTTRS). Positions 60 to 63 (DTPG) are G3. GTP-binding positions include 60 to 64 (DTPGI) and 122 to 125 (NKID). Residues 122–125 (NKID) are G4. A G5 region spans residues 150–152 (ISA). The 78-residue stretch at 202–279 (LQQELPYKLT…HLFLFVKVHE (78 aa)) folds into the KH type-2 domain.

The protein belongs to the TRAFAC class TrmE-Era-EngA-EngB-Septin-like GTPase superfamily. Era GTPase family. Monomer.

It localises to the cytoplasm. The protein resides in the cell inner membrane. An essential GTPase that binds both GDP and GTP, with rapid nucleotide exchange. Plays a role in 16S rRNA processing and 30S ribosomal subunit biogenesis and possibly also in cell cycle regulation and energy metabolism. In Rickettsia akari (strain Hartford), this protein is GTPase Era.